Here is a 74-residue protein sequence, read N- to C-terminus: Cytochrome c oxidase assembly factor 5 (74 aa).

Positions 27 to 65 (QSDCVVQEGKSPRQCLKEGYCNSLKYAFFECKRSVLDNR) constitute a CHCH domain. The Cx10C motif motif lies at 30-41 (CVVQEGKSPRQC). 2 cysteine pairs are disulfide-bonded: cysteine 30–cysteine 57 and cysteine 41–cysteine 47. Serine 37 bears the Phosphoserine mark. The Cx9C motif motif lies at 47 to 57 (CNSLKYAFFEC).

The protein belongs to the PET191 family.

In terms of biological role, involved in an early step of the mitochondrial complex IV assembly process. This is Cytochrome c oxidase assembly factor 5 (COA5) from Homo sapiens (Human).